We begin with the raw amino-acid sequence, 517 residues long: Protein ERGIC-53 (517 aa).

The N-terminal stretch at M1–S30 is a signal peptide. At D31 to S484 the chain is on the lumenal side. An L-type lectin-like domain is found at R52–L275. 2 residues coordinate a carbohydrate: S96 and D129. D160, F162, and N164 together coordinate Ca(2+). N164 and H186 together coordinate a carbohydrate. D189 provides a ligand contact to Ca(2+). Residues C198 and C238 are joined by a disulfide bond. A carbohydrate is bound at residue G259 to L261. Position 433 is a phosphoserine (S433). The chain crosses the membrane as a helical span at residues T485–Y505. At R506 to F517 the chain is on the cytoplasmic side. The tract at residues R506 to F517 is mediates interaction with RAB3GAP1, RAB3GAP2 and UBXN6. The ER export motif motif lies at F516 to F517.

Exists both as a covalent disulfide-linked homohexamer, and a complex of three disulfide-linked dimers non-covalently kept together. Interacts with MCFD2. May interact with TMEM115. Interacts with RAB3GAP1 and RAB3GAP2. Interacts with UBXN6. Interacts with SERPINA1/alpha1-antitrypsin. Interacts with BET1.

The protein localises to the endoplasmic reticulum-Golgi intermediate compartment membrane. It is found in the golgi apparatus membrane. The protein resides in the endoplasmic reticulum membrane. Its function is as follows. Mannose-specific lectin. May recognize sugar residues of glycoproteins, glycolipids, or glycosylphosphatidyl inositol anchors and may be involved in the sorting or recycling of proteins, lipids, or both. The LMAN1-MCFD2 complex forms a specific cargo receptor for the ER-to-Golgi transport of selected proteins. This Mus musculus (Mouse) protein is Protein ERGIC-53 (Lman1).